The primary structure comprises 677 residues: MIDQYKHQQLRIGSVSPQQISTWANKILPNGERVGEVTKPYTFHYKTNKPEKDGLFCERIFGPIKSGICACGNYRVIGDKKKDRKSCEQCGVEFVDSRIRRYQMGYIKLACPVTHVWYLKRLPSYIANLLDKPLKELEGLVYCDFSFARPIAKKPTFLRLRGLFEYEIQSWKYSIPLFFTTQGFDTFRNREISTGAGAIREQLADLDLRIIIDSSLVEWKELGEDGPTGNEWEDRKVGRRKDFLVRRMELAKHFIRTNIDPKWMVLCLLPVLPPELRPIVQIDGGKLMSSDINELYRRVIYRNNTLTDLLTTSRSTPGELIMCQEKLVQEAVDTLLDNGIRGQPMRDGHNKVYKSFSDVIEGKEGRFRETLLGKRVDYSGRSVIVVGPSLSLYQCGLPREIAIELFQTFVIRSLIRQQLASNIGVAKSKIREKKPIVWEILREVMRGHPVLLNRAPTLHRLGIQAFQPVLVEGRAICLHPLVRKGFNADFDGDQMAVHVPLSFEAQAEARLLMFSHINLLSPAIGDPISVPTQDMLIGLYVLTSGNRRGICVNRYNPSNHRNQNKRIYENNYKYTKEKEPFFCNSYDAIGAYRQKRINLDSPLWLRWRLDQRVIAAREAPLEVHYESLGTYYDIYGQYLIVRSIKKEILSIYIRTTVGHISIYREIEEAIQGFCQAC.

Residues Cys-69, Cys-71, Cys-87, and Cys-90 each contribute to the Zn(2+) site. Mg(2+) is bound by residues Asp-489, Asp-491, and Asp-493.

This sequence belongs to the RNA polymerase beta' chain family. RpoC1 subfamily. As to quaternary structure, in plastids the minimal PEP RNA polymerase catalytic core is composed of four subunits: alpha, beta, beta', and beta''. When a (nuclear-encoded) sigma factor is associated with the core the holoenzyme is formed, which can initiate transcription. Mg(2+) is required as a cofactor. Requires Zn(2+) as cofactor.

Its subcellular location is the plastid. The protein localises to the chloroplast. The catalysed reaction is RNA(n) + a ribonucleoside 5'-triphosphate = RNA(n+1) + diphosphate. In terms of biological role, DNA-dependent RNA polymerase catalyzes the transcription of DNA into RNA using the four ribonucleoside triphosphates as substrates. This is DNA-directed RNA polymerase subunit beta' from Daucus carota (Wild carrot).